The chain runs to 184 residues: Oocyte-secreted protein 4A (184 aa).

The signal sequence occupies residues 1–19 (MKISCVLGKLLMLFELIHG). N128 carries N-linked (GlcNAc...) asparagine glycosylation.

Belongs to the PLAC1 family.

The protein localises to the secreted. This chain is Oocyte-secreted protein 4A, found in Homo sapiens (Human).